The sequence spans 498 residues: Glutathione synthetase large chain (498 aa).

Arginine 128 provides a ligand contact to substrate. Residue glutamate 146 participates in ATP binding. Mg(2+)-binding residues include glutamate 146 and asparagine 148. Substrate is bound by residues 150-153 (ISVS), 233-235 (ERN), glutamine 239, and 291-294 (RVGY). Position 330 (lysine 330) interacts with ATP. Position 356 is a phosphoserine (serine 356). Residues 387-396 (KPQREGGGNN), tyrosine 398, 420-423 (MRYI), and glutamate 446 contribute to the ATP site. Glutamate 391 is a Mg(2+) binding site. Residue arginine 473 coordinates substrate. ATP contacts are provided by lysine 475 and glutamate 481. 484–485 (VA) lines the substrate pocket.

Belongs to the eukaryotic GSH synthase family. As to quaternary structure, heterodimer composed of a large and a small chain. Requires Mg(2+) as cofactor.

The enzyme catalyses gamma-L-glutamyl-L-cysteine + glycine + ATP = glutathione + ADP + phosphate + H(+). The protein operates within sulfur metabolism; glutathione biosynthesis; glutathione from L-cysteine and L-glutamate: step 2/2. The polypeptide is Glutathione synthetase large chain (gsa1) (Schizosaccharomyces pombe (strain 972 / ATCC 24843) (Fission yeast)).